The primary structure comprises 313 residues: Ketimine reductase mu-crystallin (313 aa).

Residue Arg-47 coordinates 3,3',5-triiodo-L-thyronine. Residues Ser-90, His-91, Arg-118, Ala-143, Val-145, Gln-146, Asn-167, Arg-168, Thr-169, Asn-172, Thr-204, Met-205, and Val-225 each contribute to the NADPH site. Glu-256 contacts 3,3',5-triiodo-L-thyronine. Ser-291 is an NADPH binding site.

Belongs to the ornithine cyclodeaminase/mu-crystallin family. As to quaternary structure, homodimer. Binds the thyroid hormone triiodothyronine (T3); T3 binding inhibits enzymatic activity. In terms of tissue distribution, expressed in the spiral ligament of the cochlea (at protein level).

The protein resides in the cytoplasm. It carries out the reaction L-pipecolate + NADP(+) = Delta(1)-piperideine-2-carboxylate + NADPH + H(+). It catalyses the reaction L-pipecolate + NAD(+) = Delta(1)-piperideine-2-carboxylate + NADH + H(+). The enzyme catalyses L-proline + NADP(+) = 1-pyrroline-2-carboxylate + NADPH + H(+). The catalysed reaction is L-proline + NAD(+) = 1-pyrroline-2-carboxylate + NADH + H(+). It carries out the reaction (3R)-1,4-thiomorpholine-3-carboxylate + NAD(+) = 3,4-dehydrothiomorpholine-3-carboxylate + NADH + 2 H(+). It catalyses the reaction (3R)-1,4-thiomorpholine-3-carboxylate + NADP(+) = 3,4-dehydrothiomorpholine-3-carboxylate + NADPH + 2 H(+). The enzyme catalyses (S)-cystathionine ketimine + NADH + 2 H(+) = (3R,5S)-2,3,5,6,7-pentahydro-1,4-thiazepine-3,5-dicarboxylate + NAD(+). The catalysed reaction is (S)-cystathionine ketimine + NADPH + 2 H(+) = (3R,5S)-2,3,5,6,7-pentahydro-1,4-thiazepine-3,5-dicarboxylate + NADP(+). It carries out the reaction (R)-lanthionine ketimine + NADPH + 2 H(+) = (3R,5R)-1,4-thiomorpholine-3,5-dicarboxylate + NADP(+). It catalyses the reaction Delta(2)-thiazoline-2-carboxylate + NADPH + 2 H(+) = L-thiazolidine-2-carboxylate + NADP(+). Functionally, catalyzes the NAD(P)H-dependent reduction of imine double bonds of a number of cyclic ketimine substrates, including sulfur-containing cyclic ketimines. Under physiological conditions, it efficiently catalyzes delta(1)-piperideine-2-carboxylate (P2C) and delta(1)-pyrroline-2-carboxylate (Pyr2C) reduction, suggesting a central role in lysine and glutamate metabolism. Additional substrates are delta(2)-thiazoline-2-carboxylate (T2C), 3,4-dehydrothiomorpholine-3-carboxylate (AECK), and (R)-lanthionine ketimine (LK) that is reduced at very low rate compared to other substrates. Also catalyzes the NAD(P)H-dependent reduction of (S)-cystathionine ketimine (CysK). This Mus musculus (Mouse) protein is Ketimine reductase mu-crystallin.